The chain runs to 437 residues: Phosphomethylpyrimidine synthase (437 aa).

Residues Asn-69, Met-98, Tyr-127, His-163, 185–187, 226–229, and Glu-265 contribute to the substrate site; these read SRG and DACR. Zn(2+) is bound at residue His-269. Tyr-292 contributes to the substrate binding site. His-333 contacts Zn(2+). [4Fe-4S] cluster contacts are provided by Cys-409, Cys-412, and Cys-416.

The protein belongs to the ThiC family. Requires [4Fe-4S] cluster as cofactor.

The enzyme catalyses 5-amino-1-(5-phospho-beta-D-ribosyl)imidazole + S-adenosyl-L-methionine = 4-amino-2-methyl-5-(phosphooxymethyl)pyrimidine + CO + 5'-deoxyadenosine + formate + L-methionine + 3 H(+). Its pathway is cofactor biosynthesis; thiamine diphosphate biosynthesis. In terms of biological role, catalyzes the synthesis of the hydroxymethylpyrimidine phosphate (HMP-P) moiety of thiamine from aminoimidazole ribotide (AIR) in a radical S-adenosyl-L-methionine (SAM)-dependent reaction. The protein is Phosphomethylpyrimidine synthase of Clostridium botulinum (strain Loch Maree / Type A3).